A 78-amino-acid chain; its full sequence is Exodeoxyribonuclease 7 small subunit (78 aa).

This sequence belongs to the XseB family. In terms of assembly, heterooligomer composed of large and small subunits.

The protein localises to the cytoplasm. It catalyses the reaction Exonucleolytic cleavage in either 5'- to 3'- or 3'- to 5'-direction to yield nucleoside 5'-phosphates.. Its function is as follows. Bidirectionally degrades single-stranded DNA into large acid-insoluble oligonucleotides, which are then degraded further into small acid-soluble oligonucleotides. This is Exodeoxyribonuclease 7 small subunit from Idiomarina loihiensis (strain ATCC BAA-735 / DSM 15497 / L2-TR).